We begin with the raw amino-acid sequence, 285 residues long: MSSTYKDNHPYHHHPHHHHHHPKREPNENNSGILYTPSPSPSPPTLKVNKDSHVIKKPPSPSSFSSAAKPRHPVIIYTHTPRIIHTNPKDFMALVQKLTGMTHSDEDLGGGNAMTDPGVVKSINRTVSEPTVDRKNNRNRCGGGNNYLRNYSGAGNGKGIFFNNTMISEDSESSSVITTEENIGEHGQVNSSLPYSAVAIPPQPPPHPPPPPPPPSMYDAAGINYGAYLPTFPIFPPANPADNFLCGNQPFANFDDPLFFAPNMRSSFSSSSSSGFDGLTEFRDF.

Residues 1 to 10 are compositionally biased toward basic and acidic residues; the sequence is MSSTYKDNHP. Residues 1–68 are disordered; the sequence is MSSTYKDNHP…PSPSSFSSAA (68 aa). Residues 11-23 show a composition bias toward basic residues; sequence YHHHPHHHHHHPK. The VQ motif lies at 91 to 100; it reads FMALVQKLTG. Residues 195 to 218 form a disordered region; sequence YSAVAIPPQPPPHPPPPPPPPSMY. Over residues 201–216 the composition is skewed to pro residues; that stretch reads PPQPPPHPPPPPPPPS.

It is found in the nucleus. Its function is as follows. May function as negative regulator of plant defense. The protein is VQ motif-containing protein 20 of Arabidopsis thaliana (Mouse-ear cress).